We begin with the raw amino-acid sequence, 353 residues long: uncharacterized protein (353 aa).

The first 30 residues, 1–30 (MHLRHLFSLRLRGSLLLGSLLVASSFSTQA), serve as a signal peptide directing secretion.

This is an uncharacterized protein from Escherichia coli O157:H7.